Consider the following 87-residue polypeptide: Type 3 secretion system needle filament protein (87 aa).

It belongs to the SctF family. As to quaternary structure, the core secretion machinery of the T3SS is composed of approximately 20 different proteins, including cytoplasmic components, a base, an export apparatus and a needle. This subunit polymerizes and forms the helical needle filament. In Y.enterocolitica E40, the needles are composed of 139 (plus-minus 19) YscF/SctF subunits.

The protein localises to the secreted. Its subcellular location is the cell surface. With respect to regulation, the secretion and/or polymerization may be controlled by the type III secretion system regulator YopR. Functionally, component of the type III secretion system (T3SS), also called injectisome, which is used to inject bacterial effector proteins into eukaryotic host cells. YscF/SctF forms the external needle filament that protrudes from the bacterial surface. The needle is not sufficient by itself for the formation of a pore allowing translocation of the Yop effectors across the host cell membrane. This is Type 3 secretion system needle filament protein from Yersinia enterocolitica.